The following is a 329-amino-acid chain: MSLLPHLILYLTLLTVVVTGETLRPRFYSETCPEAESIVRREMKKAMIKEARSVASVMRFQFHDCFVNGCDASLLLDDTPNMLGEKLSLSNIDSLRSFEVVDDIKEALEKACPATVSCADIVIMAARDAVALTGGPDWEVKLGRKDSLTASQQDSDDIMPSPRANATFLIDLFERFNLSVKDMVALSGSHSIGQGRCFSIMFRLYNQSGSGKPDPALEPSYRKKLDKLCPLGGDENVTGDLDATPQVFDNQYFKDLVSGRGFLNSDQTLYTNLVTREYVKMFSEDQDEFFRAFAEGMVKLGDLQSGRPGEIRFNCRVVNRRPIDVLLVS.

Positions 1-19 (MSLLPHLILYLTLLTVVVT) are cleaved as a signal peptide. 4 disulfide bridges follow: Cys32/Cys112, Cys65/Cys70, Cys118/Cys315, and Cys197/Cys229. Residue His63 is the Proton acceptor of the active site. Ca(2+) contacts are provided by Asp64, Val67, Gly69, Asp71, and Ser73. Pro160 contacts substrate. 2 N-linked (GlcNAc...) asparagine glycosylation sites follow: Asn165 and Asn177. Heme b is bound at residue His190. Ser191 is a binding site for Ca(2+). Asn206 and Asn236 each carry an N-linked (GlcNAc...) asparagine glycan. Asp242, Thr244, and Asp249 together coordinate Ca(2+).

It belongs to the peroxidase family. Classical plant (class III) peroxidase subfamily. The cofactor is heme b. Ca(2+) serves as cofactor.

The protein resides in the secreted. The protein localises to the vacuole. The enzyme catalyses 2 a phenolic donor + H2O2 = 2 a phenolic radical donor + 2 H2O. Functionally, removal of H(2)O(2), oxidation of toxic reductants, biosynthesis and degradation of lignin, suberization, auxin catabolism, response to environmental stresses such as wounding, pathogen attack and oxidative stress. These functions might be dependent on each isozyme/isoform in each plant tissue. The protein is Peroxidase 17 (PER17) of Arabidopsis thaliana (Mouse-ear cress).